We begin with the raw amino-acid sequence, 92 residues long: Small ribosomal subunit protein uS19c (92 aa).

The protein belongs to the universal ribosomal protein uS19 family.

Its subcellular location is the plastid. The protein localises to the chloroplast. Functionally, protein S19 forms a complex with S13 that binds strongly to the 16S ribosomal RNA. The sequence is that of Small ribosomal subunit protein uS19c (rps19) from Glycine max (Soybean).